The primary structure comprises 187 residues: RNA pyrophosphohydrolase (187 aa).

Positions 6–149 constitute a Nudix hydrolase domain; that stretch reads GYRANVGIIL…KRQVYRLALT (144 aa). The Nudix box motif lies at 38 to 59; it reads GGIKSGETPTQAMYRELAEETG.

The protein belongs to the Nudix hydrolase family. RppH subfamily. A divalent metal cation is required as a cofactor.

Its function is as follows. Accelerates the degradation of transcripts by removing pyrophosphate from the 5'-end of triphosphorylated RNA, leading to a more labile monophosphorylated state that can stimulate subsequent ribonuclease cleavage. In Nitrosomonas eutropha (strain DSM 101675 / C91 / Nm57), this protein is RNA pyrophosphohydrolase.